We begin with the raw amino-acid sequence, 250 residues long: High affinity immunoglobulin epsilon receptor subunit alpha (250 aa).

Residues 1-23 (MVTGRSAQLCLALLFMSLDVILT) form the signal peptide. Residues 24–204 (ATEKSVLTLD…AYKCKYYWLQ (181 aa)) lie on the Extracellular side of the membrane. The region spanning 28-104 (SVLTLDPPWI…QGLFKSKPVY (77 aa)) is the Ig-like 1 domain. A disulfide bond links Cys-49 and Cys-92. Asn-58, Asn-66, Asn-73, Asn-106, Asn-152, and Asn-167 each carry an N-linked (GlcNAc...) asparagine glycan. Positions 114–181 (LQTSADMVLV…YHCKGYLRQV (68 aa)) constitute an Ig-like 2 domain. A disulfide bridge links Cys-131 with Cys-174. The helical transmembrane segment at 205 to 223 (LIFPLLVAILFAVDTGLLL) threads the bilayer. Residues 224 to 250 (STEEQFKSVLEIQKTGKYKKVETELLT) are Cytoplasmic-facing.

In terms of assembly, tetramer of an alpha chain, a beta chain, and two disulfide linked gamma chains. Interacts with IGHE (via CH3 region). In terms of tissue distribution, expressed in bone marrow mast cells, as well as in the pineal gland at night.

The protein resides in the cell membrane. Its function is as follows. High-affinity receptor for immunoglobulin epsilon/IgE. Mediates IgE effector functions in myeloid cells. Upon IgE binding and antigen/allergen cross-linking initiates signaling pathways that lead to myeloid cell activation and differentiation. On mast cells, basophils and eosinophils stimulates the secretion of vasoactive amines, lipid mediators and cytokines that contribute to inflammatory response, tissue remodeling and cytotoxicity against microbes. Triggers the immediate hypersensitivity response to allergens as a host defense mechanism against helminth parasites, pathogenic bacteria and venom toxicity. When dysregulated, it can elicit harmful life-threatening allergic and anaphylactic reactions. This Mus musculus (Mouse) protein is High affinity immunoglobulin epsilon receptor subunit alpha (Fcer1a).